The primary structure comprises 583 residues: Arginine--tRNA ligase (583 aa).

Residues 123 to 133 (PNIAKEMHVGH) carry the 'HIGH' region motif.

The protein belongs to the class-I aminoacyl-tRNA synthetase family. In terms of assembly, monomer.

Its subcellular location is the cytoplasm. The catalysed reaction is tRNA(Arg) + L-arginine + ATP = L-arginyl-tRNA(Arg) + AMP + diphosphate. The protein is Arginine--tRNA ligase of Blochmanniella floridana.